Reading from the N-terminus, the 468-residue chain is RUS family member 1 (468 aa).

Ala-2 carries the N-acetylalanine modification. At Thr-49 the chain carries Phosphothreonine. A helical transmembrane segment spans residues 247 to 267 (LLMLPLVSGCPGFSLGCFFFL).

Belongs to the RUS1 family.

It localises to the membrane. This Homo sapiens (Human) protein is RUS family member 1.